A 224-amino-acid polypeptide reads, in one-letter code: Redox-sensing transcriptional repressor Rex (224 aa).

A DNA-binding region (H-T-H motif) is located at residues 17-56; that stretch reads RYHRCLEELLKNDIKRISSKELSERMGVTASQIRQDLNNF. 91 to 96 contacts NAD(+); it reads GAGNLG.

This sequence belongs to the transcriptional regulatory Rex family. Homodimer.

The protein localises to the cytoplasm. Functionally, modulates transcription in response to changes in cellular NADH/NAD(+) redox state. The chain is Redox-sensing transcriptional repressor Rex from Caldanaerobacter subterraneus subsp. tengcongensis (strain DSM 15242 / JCM 11007 / NBRC 100824 / MB4) (Thermoanaerobacter tengcongensis).